The sequence spans 93 residues: Small ribosomal subunit protein uS19 (93 aa).

Belongs to the universal ribosomal protein uS19 family.

Protein S19 forms a complex with S13 that binds strongly to the 16S ribosomal RNA. This is Small ribosomal subunit protein uS19 from Brevibacillus brevis (strain 47 / JCM 6285 / NBRC 100599).